A 396-amino-acid polypeptide reads, in one-letter code: S-adenosylmethionine synthase (396 aa).

His-16 is a binding site for ATP. Asp-18 contacts Mg(2+). Glu-44 contributes to the K(+) binding site. Residues Glu-57 and Gln-100 each coordinate L-methionine. Residues 100–110 (QSVDINQGVDR) form a flexible loop region. ATP is bound by residues 165 to 167 (DAK), Asp-240, 246 to 247 (RK), Ala-263, and Lys-267. Asp-240 is an L-methionine binding site. Lys-271 contributes to the L-methionine binding site.

Belongs to the AdoMet synthase family. Homotetramer; dimer of dimers. It depends on Mg(2+) as a cofactor. The cofactor is K(+).

Its subcellular location is the cytoplasm. The catalysed reaction is L-methionine + ATP + H2O = S-adenosyl-L-methionine + phosphate + diphosphate. Its pathway is amino-acid biosynthesis; S-adenosyl-L-methionine biosynthesis; S-adenosyl-L-methionine from L-methionine: step 1/1. Catalyzes the formation of S-adenosylmethionine (AdoMet) from methionine and ATP. The overall synthetic reaction is composed of two sequential steps, AdoMet formation and the subsequent tripolyphosphate hydrolysis which occurs prior to release of AdoMet from the enzyme. The chain is S-adenosylmethionine synthase from Pseudomonas aeruginosa (strain UCBPP-PA14).